Reading from the N-terminus, the 188-residue chain is Elongation factor P (188 aa).

The interval 139–163 (PVTKGQTASSSYKPATLSNGVRTQV) is disordered. Residues 142 to 160 (KGQTASSSYKPATLSNGVR) are compositionally biased toward polar residues.

It belongs to the elongation factor P family.

It localises to the cytoplasm. It functions in the pathway protein biosynthesis; polypeptide chain elongation. Its function is as follows. Involved in peptide bond synthesis. Stimulates efficient translation and peptide-bond synthesis on native or reconstituted 70S ribosomes in vitro. Probably functions indirectly by altering the affinity of the ribosome for aminoacyl-tRNA, thus increasing their reactivity as acceptors for peptidyl transferase. The chain is Elongation factor P from Methylobacterium nodulans (strain LMG 21967 / CNCM I-2342 / ORS 2060).